Here is a 240-residue protein sequence, read N- to C-terminus: MKIKKKNKIYQGKSKIIYSTNNSDVLILKFKKDMSRLNGKYIKKFDNKDIINNKFNYYIMNKISSFNIKTHILSLLSDNQVIVKKLKMIPIEFVVRNYAYGSLLKRFLIKERSFINPPILEFFFKNDGLKDPMINEYHCISFNLISENHIKKIKKILYKINNILKDIFYKAELILVDFKLEFGLFNGDLFLGDEFSLDNSRVWDKNSFKKMDKDIFREQLNENVIESYKEVANRIGCLID.

It belongs to the SAICAR synthetase family.

The catalysed reaction is 5-amino-1-(5-phospho-D-ribosyl)imidazole-4-carboxylate + L-aspartate + ATP = (2S)-2-[5-amino-1-(5-phospho-beta-D-ribosyl)imidazole-4-carboxamido]succinate + ADP + phosphate + 2 H(+). It functions in the pathway purine metabolism; IMP biosynthesis via de novo pathway; 5-amino-1-(5-phospho-D-ribosyl)imidazole-4-carboxamide from 5-amino-1-(5-phospho-D-ribosyl)imidazole-4-carboxylate: step 1/2. This is Phosphoribosylaminoimidazole-succinocarboxamide synthase from Wigglesworthia glossinidia brevipalpis.